A 386-amino-acid polypeptide reads, in one-letter code: Succinate--CoA ligase [ADP-forming] subunit beta (386 aa).

The ATP-grasp domain occupies 9 to 244 (KQILKRFGIS…YDEEIPEEIE (236 aa)). ATP is bound by residues K46, 53–55 (GRG), E99, C102, and E107. Mg(2+) contacts are provided by N199 and D213. Residues N264 and 320–322 (GIM) each bind substrate.

It belongs to the succinate/malate CoA ligase beta subunit family. As to quaternary structure, heterotetramer of two alpha and two beta subunits. Mg(2+) serves as cofactor.

The catalysed reaction is succinate + ATP + CoA = succinyl-CoA + ADP + phosphate. It catalyses the reaction GTP + succinate + CoA = succinyl-CoA + GDP + phosphate. Its pathway is carbohydrate metabolism; tricarboxylic acid cycle; succinate from succinyl-CoA (ligase route): step 1/1. In terms of biological role, succinyl-CoA synthetase functions in the citric acid cycle (TCA), coupling the hydrolysis of succinyl-CoA to the synthesis of either ATP or GTP and thus represents the only step of substrate-level phosphorylation in the TCA. The beta subunit provides nucleotide specificity of the enzyme and binds the substrate succinate, while the binding sites for coenzyme A and phosphate are found in the alpha subunit. This is Succinate--CoA ligase [ADP-forming] subunit beta from Ehrlichia ruminantium (strain Welgevonden).